A 217-amino-acid polypeptide reads, in one-letter code: Urease accessory protein UreG (217 aa).

Positions 1-18 (MNAPHHPAHSTVRTKKLP) are enriched in basic residues. Residues 1–24 (MNAPHHPAHSTVRTKKLPPLRVGV) form a disordered region. 26 to 33 (GPVGSGKT) lines the GTP pocket.

It belongs to the SIMIBI class G3E GTPase family. UreG subfamily. As to quaternary structure, homodimer. UreD, UreF and UreG form a complex that acts as a GTP-hydrolysis-dependent molecular chaperone, activating the urease apoprotein by helping to assemble the nickel containing metallocenter of UreC. The UreE protein probably delivers the nickel.

The protein resides in the cytoplasm. Facilitates the functional incorporation of the urease nickel metallocenter. This process requires GTP hydrolysis, probably effectuated by UreG. The protein is Urease accessory protein UreG of Paraburkholderia xenovorans (strain LB400).